The chain runs to 160 residues: Ribosomal RNA large subunit methyltransferase H (160 aa).

The segment at 44–63 (LPESRASNSATRKREEAVQI) is disordered. S-adenosyl-L-methionine contacts are provided by residues L76, G108, and 127 to 132 (LGKMTW).

It belongs to the RNA methyltransferase RlmH family. Homodimer.

The protein resides in the cytoplasm. The catalysed reaction is pseudouridine(1915) in 23S rRNA + S-adenosyl-L-methionine = N(3)-methylpseudouridine(1915) in 23S rRNA + S-adenosyl-L-homocysteine + H(+). Functionally, specifically methylates the pseudouridine at position 1915 (m3Psi1915) in 23S rRNA. The sequence is that of Ribosomal RNA large subunit methyltransferase H from Allorhizobium ampelinum (strain ATCC BAA-846 / DSM 112012 / S4) (Agrobacterium vitis (strain S4)).